A 141-amino-acid polypeptide reads, in one-letter code: Large-conductance mechanosensitive channel (141 aa).

The next 2 helical transmembrane spans lie at 16 to 36 (VIDL…VDSL) and 86 to 106 (GNFI…FLMV).

The protein belongs to the MscL family. In terms of assembly, homopentamer.

It is found in the cell inner membrane. Its function is as follows. Channel that opens in response to stretch forces in the membrane lipid bilayer. May participate in the regulation of osmotic pressure changes within the cell. This is Large-conductance mechanosensitive channel from Ralstonia nicotianae (strain ATCC BAA-1114 / GMI1000) (Ralstonia solanacearum).